Consider the following 32-residue polypeptide: Coenzyme PQQ synthesis protein A (32 aa).

Residues 16-20 constitute a cross-link (pyrroloquinoline quinone (Glu-Tyr)); sequence EINMY.

Belongs to the PqqA family.

It functions in the pathway cofactor biosynthesis; pyrroloquinoline quinone biosynthesis. Its function is as follows. Required for coenzyme pyrroloquinoline quinone (PQQ) biosynthesis. PQQ is probably formed by cross-linking a specific glutamate to a specific tyrosine residue and excising these residues from the peptide. The sequence is that of Coenzyme PQQ synthesis protein A from Dinoroseobacter shibae (strain DSM 16493 / NCIMB 14021 / DFL 12).